A 342-amino-acid chain; its full sequence is Isopentenyl-diphosphate delta-isomerase (342 aa).

11-12 (RK) contributes to the substrate binding site. FMN contacts are provided by residues S68, 69 to 71 (SMT), S99, and N127. 99–101 (SMR) provides a ligand contact to substrate. Residue Q162 coordinates substrate. E163 contributes to the Mg(2+) binding site. FMN-binding positions include K194, T224, 274–276 (GLK), and 295–296 (AG).

Belongs to the IPP isomerase type 2 family. As to quaternary structure, homooctamer. Dimer of tetramers. The cofactor is FMN. It depends on NADPH as a cofactor. Mg(2+) is required as a cofactor.

Its subcellular location is the cytoplasm. It carries out the reaction isopentenyl diphosphate = dimethylallyl diphosphate. Involved in the biosynthesis of isoprenoids. Catalyzes the 1,3-allylic rearrangement of the homoallylic substrate isopentenyl (IPP) to its allylic isomer, dimethylallyl diphosphate (DMAPP). The protein is Isopentenyl-diphosphate delta-isomerase of Rickettsia rickettsii (strain Iowa).